Here is a 63-residue protein sequence, read N- to C-terminus: Large ribosomal subunit protein uL29 (63 aa).

The protein belongs to the universal ribosomal protein uL29 family.

The sequence is that of Large ribosomal subunit protein uL29 from Histophilus somni (strain 129Pt) (Haemophilus somnus).